The chain runs to 337 residues: Putative tRNA (cytidine(32)/guanosine(34)-2'-O)-methyltransferase (337 aa).

S-adenosyl-L-methionine-binding residues include G53, W55, D76, D92, and D117. Residue K157 is the Proton acceptor of the active site. 2 stretches are compositionally biased toward basic and acidic residues: residues 304–318 (LKAELSRGKDQKKTP) and 327–337 (ELEKAAEKFQL). A disordered region spans residues 304-337 (LKAELSRGKDQKKTPAENVPSVEELEKAAEKFQL).

Belongs to the class I-like SAM-binding methyltransferase superfamily. RNA methyltransferase RlmE family. TRM7 subfamily.

Its subcellular location is the cytoplasm. The catalysed reaction is cytidine(32)/guanosine(34) in tRNA + 2 S-adenosyl-L-methionine = 2'-O-methylcytidine(32)/2'-O-methylguanosine(34) in tRNA + 2 S-adenosyl-L-homocysteine + 2 H(+). In terms of biological role, methylates the 2'-O-ribose of nucleotides at positions 32 and 34 of the tRNA anticodon loop of substrate tRNAs. This chain is Putative tRNA (cytidine(32)/guanosine(34)-2'-O)-methyltransferase, found in Caenorhabditis elegans.